Reading from the N-terminus, the 106-residue chain is Integration host factor subunit alpha (106 aa).

Belongs to the bacterial histone-like protein family. As to quaternary structure, heterodimer of an alpha and a beta chain.

This protein is one of the two subunits of integration host factor, a specific DNA-binding protein that functions in genetic recombination as well as in transcriptional and translational control. The protein is Integration host factor subunit alpha of Nitrobacter winogradskyi (strain ATCC 25391 / DSM 10237 / CIP 104748 / NCIMB 11846 / Nb-255).